Consider the following 552-residue polypeptide: Asparagine--tRNA ligase, cytoplasmic (552 aa).

The tract at residues 1–23 (MSQVYVNEKTGADSTDVSGSEQQ) is disordered. Over residues 12 to 23 (ADSTDVSGSEQQ) the composition is skewed to polar residues.

Belongs to the class-II aminoacyl-tRNA synthetase family.

It localises to the cytoplasm. The catalysed reaction is tRNA(Asn) + L-asparagine + ATP = L-asparaginyl-tRNA(Asn) + AMP + diphosphate + H(+). This chain is Asparagine--tRNA ligase, cytoplasmic (DED81), found in Debaryomyces hansenii (strain ATCC 36239 / CBS 767 / BCRC 21394 / JCM 1990 / NBRC 0083 / IGC 2968) (Yeast).